The sequence spans 87 residues: Sec-independent protein translocase protein TatA (87 aa).

Residues 3 to 23 (IFGIGLPEMIVILVVALLIFG) traverse the membrane as a helical segment. The segment at 61 to 87 (EGVKVSTSASEPEKVVDVSSATNTNKN) is disordered.

It belongs to the TatA/E family. As to quaternary structure, forms a complex with TatC.

The protein localises to the cell inner membrane. Functionally, part of the twin-arginine translocation (Tat) system that transports large folded proteins containing a characteristic twin-arginine motif in their signal peptide across membranes. TatA could form the protein-conducting channel of the Tat system. In Trichodesmium erythraeum (strain IMS101), this protein is Sec-independent protein translocase protein TatA.